A 283-amino-acid polypeptide reads, in one-letter code: Polyamine aminopropyltransferase (283 aa).

A PABS domain is found at 5–238 (QTWIDEYHKG…GIWSWTFASS (234 aa)). Residue Gln32 coordinates S-methyl-5'-thioadenosine. Residues His63 and Asp87 each coordinate spermidine. Residues Glu107 and 139-140 (DG) contribute to the S-methyl-5'-thioadenosine site. Asp158 acts as the Proton acceptor in catalysis. 158–161 (DCSD) serves as a coordination point for spermidine.

Belongs to the spermidine/spermine synthase family. As to quaternary structure, homodimer or homotetramer.

Its subcellular location is the cytoplasm. It catalyses the reaction S-adenosyl 3-(methylsulfanyl)propylamine + putrescine = S-methyl-5'-thioadenosine + spermidine + H(+). It functions in the pathway amine and polyamine biosynthesis; spermidine biosynthesis; spermidine from putrescine: step 1/1. In terms of biological role, catalyzes the irreversible transfer of a propylamine group from the amino donor S-adenosylmethioninamine (decarboxy-AdoMet) to putrescine (1,4-diaminobutane) to yield spermidine. This is Polyamine aminopropyltransferase from Prochlorococcus marinus (strain MIT 9301).